The chain runs to 149 residues: Probable microsomal glutathione S-transferase (149 aa).

2 helical membrane-spanning segments follow: residues 7-27 and 123-143; these read SIFPDFIVFPSAISTIAIGLW and LSHISFFALLGGSAFGIGSSL.

It belongs to the MAPEG family.

The protein resides in the membrane. The catalysed reaction is RX + glutathione = an S-substituted glutathione + a halide anion + H(+). Its function is as follows. May perform the conjugation of reduced glutathione to electrophiles. This Dictyostelium discoideum (Social amoeba) protein is Probable microsomal glutathione S-transferase (mgst).